We begin with the raw amino-acid sequence, 543 residues long: Chaperonin GroEL (543 aa).

ATP contacts are provided by residues 30–33 (TLGP), K51, 87–91 (DGTTT), G415, 479–481 (NAA), and D495.

Belongs to the chaperonin (HSP60) family. Forms a cylinder of 14 subunits composed of two heptameric rings stacked back-to-back. Interacts with the co-chaperonin GroES.

Its subcellular location is the cytoplasm. It carries out the reaction ATP + H2O + a folded polypeptide = ADP + phosphate + an unfolded polypeptide.. Functionally, together with its co-chaperonin GroES, plays an essential role in assisting protein folding. The GroEL-GroES system forms a nano-cage that allows encapsulation of the non-native substrate proteins and provides a physical environment optimized to promote and accelerate protein folding. The polypeptide is Chaperonin GroEL (Francisella philomiragia subsp. philomiragia (strain ATCC 25017 / CCUG 19701 / FSC 153 / O#319-036)).